The following is an 81-amino-acid chain: uncharacterized protein (81 aa).

This is an uncharacterized protein from Sulfolobus islandicus filamentous virus (isolate Iceland/Hveragerdi) (SIFV).